The chain runs to 356 residues: Cyclin-D4-1 (356 aa).

It belongs to the cyclin family. Cyclin D subfamily.

The protein is Cyclin-D4-1 (CYCD4-1) of Oryza sativa subsp. japonica (Rice).